Here is a 62-residue protein sequence, read N- to C-terminus: Large ribosomal subunit protein uL30 (62 aa).

The protein belongs to the universal ribosomal protein uL30 family. Part of the 50S ribosomal subunit.

In Heliobacterium modesticaldum (strain ATCC 51547 / Ice1), this protein is Large ribosomal subunit protein uL30.